Consider the following 114-residue polypeptide: MTDLDHRYPGEETEPYGPPSGSLADLLERVLDKGIVIAGDIKIDLLDIELLTIRLRLFIASVDTAKKAGIDWWETDPALSSRAARDALAEENARLRERLDALEGAAGETTGAVR.

Residues 1–10 (MTDLDHRYPG) are compositionally biased toward basic and acidic residues. Residues 1 to 21 (MTDLDHRYPGEETEPYGPPSG) form a disordered region.

Belongs to the gas vesicle GvpA family. As to quaternary structure, interacts with GvpA.

It is found in the gas vesicle. A minor component of the gas vesicle, might be involved in nucleating gas vesicle formation. Gas vesicles (GV) are hollow, gas filled proteinaceous nanostructures. It is not clear what function GVs perform in soil bacteria. The sequence is that of Probable gas vesicle protein J2 from Streptomyces coelicolor (strain ATCC BAA-471 / A3(2) / M145).